We begin with the raw amino-acid sequence, 353 residues long: DNA-directed RNA polymerase subunit alpha (353 aa).

The alpha N-terminal domain (alpha-NTD) stretch occupies residues 1–245 (MEKIQKITYK…AHFQIIGNIN (245 aa)). Residues 261 to 353 (EREIKSTTPI…QLNNSEEGEE (93 aa)) are alpha C-terminal domain (alpha-CTD).

This sequence belongs to the RNA polymerase alpha chain family. As to quaternary structure, homodimer. The RNAP catalytic core consists of 2 alpha, 1 beta, 1 beta' and 1 omega subunit. When a sigma factor is associated with the core the holoenzyme is formed, which can initiate transcription.

The catalysed reaction is RNA(n) + a ribonucleoside 5'-triphosphate = RNA(n+1) + diphosphate. Its function is as follows. DNA-dependent RNA polymerase catalyzes the transcription of DNA into RNA using the four ribonucleoside triphosphates as substrates. The sequence is that of DNA-directed RNA polymerase subunit alpha from Mycoplasma sp.